The chain runs to 503 residues: Serine/threonine-protein kinase chk-1 (503 aa).

Residues 24 to 286 (YRVVQTLGEG…IEQIQADPWY (263 aa)) form the Protein kinase domain. ATP contacts are provided by residues 30–38 (LGEGAFGEV) and lysine 54. Aspartate 150 serves as the catalytic Proton acceptor. A disordered region spans residues 320–346 (SAKRRHLETPNEKSTLAERQNASFSQP). Over residues 331–346 (EKSTLAERQNASFSQP) the composition is skewed to polar residues. Phosphoserine is present on serine 344.

This sequence belongs to the protein kinase superfamily. CAMK Ser/Thr protein kinase family. NIM1 subfamily. Expressed in the germline.

The protein localises to the cytoplasm. It is found in the nucleus. Its subcellular location is the perinuclear region. The catalysed reaction is L-seryl-[protein] + ATP = O-phospho-L-seryl-[protein] + ADP + H(+). The enzyme catalyses L-threonyl-[protein] + ATP = O-phospho-L-threonyl-[protein] + ADP + H(+). In terms of biological role, serine/threonine-protein kinase which is required for checkpoint-mediated cell cycle arrest and activation of DNA repair in response to the presence of DNA damage or unreplicated DNA. May also negatively regulate cell cycle progression during unperturbed cell cycles. Required for checkpoint mediated cell cycle arrest in response to DNA damage in germline cells. Delays cell-cycle reentry of the Z2 and Z3 primordial germ cells in response to transcription-induced DNA damage as they emerge from cell cycle arrest in L1 larvae. Essential for embryogenesis. The chain is Serine/threonine-protein kinase chk-1 from Caenorhabditis elegans.